The chain runs to 153 residues: UPF0756 membrane protein LSEI_1366 (153 aa).

4 helical membrane-spanning segments follow: residues 4–24, 52–72, 85–105, and 115–135; these read WLFLLGILAIAIVGKNKSLII, WGVTVISAAIMVPIATGEIGF, WIAIGCGVLVAVLSAKGVGLL, and LVFGTIIGVVFLKGIAAGPVI.

This sequence belongs to the UPF0756 family.

The protein localises to the cell membrane. The chain is UPF0756 membrane protein LSEI_1366 from Lacticaseibacillus paracasei (strain ATCC 334 / BCRC 17002 / CCUG 31169 / CIP 107868 / KCTC 3260 / NRRL B-441) (Lactobacillus paracasei).